The primary structure comprises 215 residues: Probable phosphoglycerate mutase GpmB (215 aa).

Residues 8–15, 21–22, arginine 58, 82–85, and 151–152 contribute to the substrate site; these read RHGETLWN, QG, ELNM, and GM. The active-site Tele-phosphohistidine intermediate is histidine 9. The Proton donor/acceptor role is filled by glutamate 82.

This sequence belongs to the phosphoglycerate mutase family. GpmB subfamily.

It carries out the reaction (2R)-2-phosphoglycerate = (2R)-3-phosphoglycerate. It functions in the pathway carbohydrate degradation; glycolysis; pyruvate from D-glyceraldehyde 3-phosphate: step 3/5. This Yersinia pseudotuberculosis serotype O:1b (strain IP 31758) protein is Probable phosphoglycerate mutase GpmB.